The sequence spans 240 residues: 6-carboxyhexanoate--CoA ligase (240 aa).

It belongs to the BioW family. As to quaternary structure, homodimer. The cofactor is Mg(2+).

The enzyme catalyses heptanedioate + ATP + CoA = 6-carboxyhexanoyl-CoA + AMP + diphosphate. It functions in the pathway metabolic intermediate metabolism; pimeloyl-CoA biosynthesis; pimeloyl-CoA from pimelate: step 1/1. Its function is as follows. Catalyzes the transformation of pimelate into pimeloyl-CoA with concomitant hydrolysis of ATP to AMP. This chain is 6-carboxyhexanoate--CoA ligase, found in Aquifex aeolicus (strain VF5).